The primary structure comprises 192 residues: Virion infectivity factor (192 aa).

The tract at residues 14 to 17 (DRMR) is interaction with host APOBEC3F; F1-box. The interaction with host APOBEC3G; G-box stretch occupies residues 40–44 (YRHHF). An interaction with host APOBEC3F and APOBEC3G; FG-box region spans residues 54–72 (EVHIPLETAELVITTYWGL). The interval 74–79 (PGEREW) is interaction with host APOBEC3F; F2-box. Positions 75 to 114 (GEREWHLGQGVSIEWRQGRYRTQIDPGLADQLIHIYYFDC) are RNA-binding. Phosphothreonine; by host MAP4K1 is present on threonine 96. Zn(2+) is bound by residues histidine 108, cysteine 114, cysteine 133, and histidine 139. Positions 108–139 (HIYYFDCFSESAIRKAILGHKISPRCNYQAGH) match the HCCH motif motif. Serine 144 carries the phosphoserine; by host modification. The BC-box-like motif motif lies at 144 to 153 (SLQYLALTAL). A multimerization region spans residues 151–164 (TALIAPKKTKPPLP). Residues 151-180 (TALIAPKKTKPPLPSVQKLVEDRWNKPQKT) are SOCS box-like. The tract at residues 164-192 (PSVQKLVEDRWNKPQKTRGHRESHTMNGH) is disordered. A Phosphoserine; by host MAP4K1 modification is found at serine 165. The tract at residues 171 to 172 (ED) is membrane association. The segment covering 183 to 192 (HRESHTMNGH) has biased composition (basic and acidic residues). Threonine 188 is modified (phosphothreonine; by host).

Belongs to the primate lentivirus group Vif protein family. Homomultimer; in vitro and presumably in vivo. Interacts with viral RNA and Pr55Gag precursor; these interactions mediate Vif incorporation into the virion. Interacts with the viral reverse transcriptase. Forms cullin-5-RING E3 ubiquitin-protein ligase complex (ECS complex) by interacting with host CUL5, RBX2, elongin BC complex (ELOB and ELOC) and CBFB/CBF-beta. Within the ECS complex, Vif interacts directly with host CUL5, ELOC and APOBEC (APOBEC3F and APOBEC3G) substrates. The ECS complex also contains some single-stranded RNA (ssRNA) that acts as a glue that bridges Vif with APOBEC (APOBEC3F and APOBEC3G) substrates. Interacts with host UBCE7IP1 isoform 3/ZIN and possibly with SAT. Interacts with host tyrosine kinases HCK and FYN; these interactions may decrease level of phosphorylated APOBEC3G incorporation into virions. Interacts with host ABCE1; this interaction may play a role in protecting viral RNA from damage during viral assembly. Interacts with host MDM2; this interaction targets Vif for degradation by the proteasome. In terms of processing, processed in virion by the viral protease. Highly phosphorylated on serine and threonine residues. Post-translationally, polyubiquitinated and degraded by the proteasome in the presence of APOBEC3G.

It is found in the host cytoplasm. Its subcellular location is the host cell membrane. The protein resides in the virion. In terms of biological role, counteracts the innate antiviral activity of host APOBEC3F and APOBEC3G by promoting their ubiquitination and degradation. Acts as a substrate recognition component of an E3 ubiquitin-protein ligase complex: mechanistically, Vif hijacks a host cullin-5-RING E3 ubiquitin-protein ligase complex (ECS complex) and the transcription coactivator CBFB/CBF-beta to form an active E3 ubiquitin-protein ligase complex that targets APOBEC3G and APOBEC3F for polyubiquitination, leading to their degradation by the proteasome. Vif interaction with APOBEC3G also blocks its cytidine deaminase activity in a proteasome-independent manner, suggesting a dual inhibitory mechanism. May interact directly with APOBEC3G mRNA in order to inhibit its translation. Association with CBFB/CBF-beta also inhibits the transcription coactivator activity of CBFB/CBF-beta. Seems to play a role in viral morphology by affecting the stability of the viral nucleoprotein core. Finally, Vif also contributes to the G2 cell cycle arrest observed in HIV infected cells. This Homo sapiens (Human) protein is Virion infectivity factor.